The following is a 1243-amino-acid chain: LETPGEEVDNRSLEEILSSIPPPPPPAMASEAGAPRLMITHIVNQNFKSCAGEKILGPFHKRFSCIIGPNGSGKSNVIDSMLFVFGYRAQKIRSKKLSVLIHNSDEHKDIQSCTVEVHFQKIIDKEGDDYEVIPNSNFCVSRTAYRDNTSVYHISGKKRTFKDVGNLLRSHGIDLDHNRFLILQGEVEQIAMMKPKGQTEHDEGMLEYLEDIIGCGRLNEPIKVLCRRVEILNENRGEKLNRVKMVEKEKDAVEGEKNIAIEFLTLEKEMFKKKNHVCQYYIYDLQKRIDEMKTQKEKIHEDTKEITEKSNMLSNEMKAKNSAVKDIEKKLHKATKFIEENKEKFRQLDLEDVQVREKLKHATSKAKKLEKQLQKDKEKVEELKSIPAKSKTIINETTTKSSSLEKEKEKEEKKLKEVMDSLKQETQGLQKEKEDQEKELMGFNKSVNEARSKMEVAQSELDIYLSRHNTAVSQLSKAKETLITASETLKERKAAIGEINTKLPQTQQELKEKEKELQKLTQEEINLKSLVHDLFQKVEEAKSSLAMNRSRGKVLDAIIQEKKSGRIPGIYGRLGDLGAIDEKYDIAISSCCHALDYIVVDSIDTAQECVNFLKRHNIGVATFIGLDKMTVWAKKMAKIQTPENTPRLFDLVKAKNEEIRQAFYFALRDTLVADNLDQATRVAYQKDRRWRVVTLQGQIIEQSGTMTGGGSKVMRGRMGSSVIVEISEEEVNKMESQLQKHSKQARRIQEQKVQHEERVVKLRHSEREMRNTLEKFAASIQGLSDQEEYLTVQIKELEANVLTTAPDKKKQKLLEENVSAFKKEYDAVAEKAGKVEAEVKRLHDTIIEINNRKLKAQQNKLDMINKQLDECASAITKAQVAIKTADRNLIKAQDSVVRTEKEIKDTEKETNDLKAELKAIEDKAEEVIKKTNAAEESLPEIQKEHRNLLQELKVIQENEHALQKDALSIKLKLEQIDGHIAEHNSKIKYWQKEISKIKLHPIEDNPVETVSVLSPEDLEAIKNPDSITNQIAILEAQCHEMKPNLGAIAEYKKKEELYLQRVAELDKITSERDNFRQAYEDLRKQRLNEFMAGFYIITNKLKENYQMLTLGGDAELELVDSLDPFSEGIMFSVRPPKKSWKKIFNLSGGEKTLSSLALVFALHHYKPTPLYFMDEIDAALDFKNVSIVAFYIYEQTKNAQFIIISLRNNMFEISDRLIGIYKTYNITKSVAVNPKEIASKGLC.

Residues 1–30 (LETPGEEVDNRSLEEILSSIPPPPPPAMAS) are disordered. Position 68–75 (68–75 (GPNGSGKS)) interacts with ATP. S98 is modified (phosphoserine). The stretch at 225–546 (LCRRVEILNE…KVEEAKSSLA (322 aa)) forms a coiled coil. N6-acetyllysine is present on residues K336 and K634. Residues 568–682 (PGIYGRLGDL…ADNLDQATRV (115 aa)) form the SMC hinge domain. Residues 721-975 (SVIVEISEEE…ALSIKLKLEQ (255 aa)) are a coiled coil. Phosphoserine is present on residues S937 and S1011. Residues 1062–1090 (VAELDKITSERDNFRQAYEDLRKQRLNEF) adopt a coiled-coil conformation.

This sequence belongs to the SMC family. SMC4 subfamily. As to quaternary structure, forms a heterodimer with SMC2. Component of the condensin complex, which contains the SMC2 and SMC4 heterodimer, and three non SMC subunits that probably regulate the complex: BRRN1/CAPH, CNAP1/CAPD2 and CAPG.

Its subcellular location is the nucleus. The protein localises to the cytoplasm. It localises to the chromosome. Its function is as follows. Central component of the condensin complex, a complex required for conversion of interphase chromatin into mitotic-like condense chromosomes. The condensin complex probably introduces positive supercoils into relaxed DNA in the presence of type I topoisomerases and converts nicked DNA into positive knotted forms in the presence of type II topoisomerases. This is Structural maintenance of chromosomes protein 4 (SMC4) from Microtus arvalis (Common vole).